The sequence spans 482 residues: UDP-N-acetylmuramoyl-L-alanyl-D-glutamate--2,6-diaminopimelate ligase (482 aa).

Serine 30 contacts UDP-N-acetyl-alpha-D-muramoyl-L-alanyl-D-glutamate. 111–117 serves as a coordination point for ATP; the sequence is GTNGKTT. UDP-N-acetyl-alpha-D-muramoyl-L-alanyl-D-glutamate-binding positions include 153–154, serine 180, glutamine 186, and arginine 188; that span reads TT. Residue lysine 220 is modified to N6-carboxylysine. Meso-2,6-diaminopimelate is bound by residues arginine 378, 402–405, glycine 455, and glutamate 459; that span reads DNPR. Residues 402–405 carry the Meso-diaminopimelate recognition motif motif; the sequence is DNPR.

Belongs to the MurCDEF family. MurE subfamily. The cofactor is Mg(2+). In terms of processing, carboxylation is probably crucial for Mg(2+) binding and, consequently, for the gamma-phosphate positioning of ATP.

Its subcellular location is the cytoplasm. It catalyses the reaction UDP-N-acetyl-alpha-D-muramoyl-L-alanyl-D-glutamate + meso-2,6-diaminopimelate + ATP = UDP-N-acetyl-alpha-D-muramoyl-L-alanyl-gamma-D-glutamyl-meso-2,6-diaminopimelate + ADP + phosphate + H(+). The protein operates within cell wall biogenesis; peptidoglycan biosynthesis. Its function is as follows. Catalyzes the addition of meso-diaminopimelic acid to the nucleotide precursor UDP-N-acetylmuramoyl-L-alanyl-D-glutamate (UMAG) in the biosynthesis of bacterial cell-wall peptidoglycan. The polypeptide is UDP-N-acetylmuramoyl-L-alanyl-D-glutamate--2,6-diaminopimelate ligase (Bacteroides thetaiotaomicron (strain ATCC 29148 / DSM 2079 / JCM 5827 / CCUG 10774 / NCTC 10582 / VPI-5482 / E50)).